We begin with the raw amino-acid sequence, 437 residues long: CMP-5'-(3-aminopropyl)phosphonate hydroxylase (437 aa).

FAD is required as a cofactor.

The catalysed reaction is CMP-5'-(3-aminopropyl)phosphonate + NADPH + O2 = CMP-5'-(N-hydroxy-3-aminopropyl)phosphonate + NADP(+) + H2O. It functions in the pathway antibiotic biosynthesis. Hydroxylase involved in the biosynthesis of the phosphonate antibiotic FR-900098, a potent antimalarial agent that acts as an inhibitor of 1-deoxy-D-xylulose 5-phosphate reductoisomerase (DXR), the first enzyme in the nonmevalonate pathway for isoprenoid biosynthesis. Catalyzes the N-hydroxylation of CMP-5'-3-aminopropylphosphonate (CMP-5'-3APn) to CMP-5'-(N-hydroxy-3-aminopropyl)phosphonate (CMP-5'-H3APn). Cannot use CMP-5'-N-acetyl-3-aminopropylphosphonate (CMP-5'-Ac3APn) as a substrate. The polypeptide is CMP-5'-(3-aminopropyl)phosphonate hydroxylase (Streptomyces rubellomurinus (strain ATCC 31215)).